Here is a 121-residue protein sequence, read N- to C-terminus: Flagellar hook-basal body complex protein FliE (121 aa).

It belongs to the FliE family.

It localises to the bacterial flagellum basal body. In Treponema denticola (strain ATCC 35405 / DSM 14222 / CIP 103919 / JCM 8153 / KCTC 15104), this protein is Flagellar hook-basal body complex protein FliE.